A 299-amino-acid chain; its full sequence is ATP phosphoribosyltransferase (299 aa).

This sequence belongs to the ATP phosphoribosyltransferase family. Long subfamily. Equilibrium between an active dimeric form, an inactive hexameric form and higher aggregates. Interconversion between the various forms is largely reversible and is influenced by the natural substrates and inhibitors of the enzyme. It depends on Mg(2+) as a cofactor.

The protein localises to the cytoplasm. The enzyme catalyses 1-(5-phospho-beta-D-ribosyl)-ATP + diphosphate = 5-phospho-alpha-D-ribose 1-diphosphate + ATP. It participates in amino-acid biosynthesis; L-histidine biosynthesis; L-histidine from 5-phospho-alpha-D-ribose 1-diphosphate: step 1/9. Its activity is regulated as follows. Feedback inhibited by histidine. Functionally, catalyzes the condensation of ATP and 5-phosphoribose 1-diphosphate to form N'-(5'-phosphoribosyl)-ATP (PR-ATP). Has a crucial role in the pathway because the rate of histidine biosynthesis seems to be controlled primarily by regulation of HisG enzymatic activity. This chain is ATP phosphoribosyltransferase, found in Shigella flexneri serotype 5b (strain 8401).